Reading from the N-terminus, the 30-residue chain is Photosystem I reaction center subunit XII (30 aa).

The chain crosses the membrane as a helical span at residues 7–29; the sequence is LIAFFLAFTAGILAIKLGQALYD.

Belongs to the PsaM family.

It is found in the plastid. The protein resides in the chloroplast thylakoid membrane. The polypeptide is Photosystem I reaction center subunit XII (Pinus thunbergii (Japanese black pine)).